A 196-amino-acid polypeptide reads, in one-letter code: Putative AAA family ATPase L572 (196 aa).

32-39 (NAVNCKET) contributes to the ATP binding site.

It belongs to the AAA ATPase family.

This chain is Putative AAA family ATPase L572, found in Acanthamoeba polyphaga mimivirus (APMV).